Consider the following 459-residue polypeptide: NADH oxidase (459 aa).

Asn10 provides a ligand contact to FAD. Catalysis depends on His11, which acts as the Proton acceptor. FAD-binding residues include Ala12, Asp34, Gln35, Cys44, Val81, Ala110, Ser113, Lys143, and Tyr172. The Redox-active role is filled by Cys44. Cys44 is modified (cysteine sulfinic acid (-SO2H)). Positions 173, 192, 201, and 256 each coordinate NAD(+). An FAD-binding site is contributed by Asp294. Ala310 lines the NAD(+) pocket. The FAD site is built by Leu311, Ala312, and Ser313. An NAD(+)-binding site is contributed by Gly341. FAD is bound at residue Phe439.

Belongs to the class-III pyridine nucleotide-disulfide oxidoreductase family. The cofactor is FAD.

The protein resides in the secreted. The protein localises to the cell wall. The enzyme catalyses 2 NADH + O2 + 2 H(+) = 2 NAD(+) + 2 H2O. Functionally, catalyzes the four-electron reduction of molecular oxygen to water. Plays a role in redox balance maintenance. May be involved in mediating bacterial adhesion to host cells. May be considered a potential virulence factor. The chain is NADH oxidase from Streptococcus pneumoniae (strain ATCC BAA-255 / R6).